A 1603-amino-acid polypeptide reads, in one-letter code: MEAVIKVISSACKTYCGKTSPSKKEIGAMLSLLQKEGLLMSPSDLYSPGSWDPITAALSQRAMVLGKSGELKTWGLVLGALKAAREEQVTSEQAKFWLGLGGGRVSPPGPECIEKPATERRIDKGEEVGETTVQRDAKMAPEETATPKTVGTSCYHCGTAIGCNCATASAPPPPYVGSGLYPSLAGVGEQQGQGGDTPRGAEQPRAEPGHAGLAPGPALTDWARIREELASTGPPVVAMPVVIKTEGPAWTPLEPKLITRLADTVRTKGLRSPITMAEVEALMSSPLLPHDVTNLMRVILGPAPYALWMDAWGVQLQTVIAAATRDPRHPANGQGRGERTNLDRLKGLADGMVGNPQGQAALLRPGELVAITASALQAFREVARLAEPAGPWADITQGPSESFVDFANRLIKAVEGSDLPPSARAPVIIDCFRQKSQPDIQQLIRAAPSTLTTPGEIIKYVLDRQKIAPLTDQGIAAAMSSAIQPLVMAVVNRERDGQTGSGGRARRLCYTCGSPGHYQAQCPKKRKSGNSRERCQLCDGMGHNAKQCRRRDSNQGQRPGRGLSSGPWPVSEQPAVSLAMTMEHKDRPLVRVILTNTGSHPVKQRSVYITALLDSGADITIISEEDWPTDWPVVDTANPQIHGIGGGIPMRKSRDMIELGVINRDGSLERPLLLFPAVAMVRGSILGRDCLQGLGLRLTNLVGRATVLTVALHLAIPLKWKPDHTPVWIDQWPLPEGKLVALTQLVEKELQLGHIEPSLSCWNTPVFVIRKASGSYRLLHDLRAVNAKLVPFGAVQQGAPVLSALPRGWPLMVLDLKDCFFSIPLAEQDREAFAFTLPSVNNQAPARRFQWKVLPQGMTCSPTICQLVVGQVLEPLRLKHPSLRMLHYMDDLLLAASSHDGLEAAGEEVINTLERAGFTISPDKIQREPGVQYLGYKLGSTYVAPVGLVAEPRIATLWDVQKLVGSLQWLRPALGIPPRLMGPFYEQLRGSDPNEAREWNLDMKMAWREIVQLSTTAALERWDPALPLEGAVVRCEQGAIGVLGQGLSTHPRPCLWLFSTQPTKAFTAWLEVLTLLITKLRASAVRTFGKEVDILLLPACFREDLPLPEGILLALRGFAGKIRSSDTPSIFDIARPLHVSLKVRVTDHPVPGPTVFTDASSSTHKGVVVWREGPRWEIKEIADLGASVQQLEARAVAMALLLWPTTPTNVVTDSAFVAKMLLKMGQEGVPSTAAAFILEDALSQRSAMAAVLHVRSHSEVPGFFTEGNDVADSQATFQAYPLREAKDLHTTLHIGPRALSKACNISMQQAREVVQTCPHCNSAPALEAGVNPRGLGPLQIWQTDFTLEPRMAPRSWLAVTVDTASSAIVVTQHGRVTSVAAQHHWATAIAVLGRPKAIKTDNGSCFTSKSTREWLARWGIAHTTGIPGNSQGQAMVERANRLLKDKIRVLAEGDGFMKRIPASKQGELLAKAMYALNHFERGENTKTPVQKHWRPTVLTEGPPVKIRIETGEWEKGWNVLVWGRGYAAVKNRDTDKVIWVPSRKVKPDITQKDEVTKKDEASPLFAGSSDWIPWGDEQEGLQEEAASNKQEGPGEDTLAANES.

Residues 128-141 (VGETTVQRDAKMAP) show a composition bias toward basic and acidic residues. The segment at 128-150 (VGETTVQRDAKMAPEETATPKTV) is disordered. A PPXY motif motif is present at residues 172–175 (PPPY). The LYPX(n)L motif signature appears at 180-184 (LYPSL). The segment at 181-215 (YPSLAGVGEQQGQGGDTPRGAEQPRAEPGHAGLAP) is disordered. Residues 219 to 229 (LTDWARIREEL) carry the Nuclear export signal motif. CCHC-type zinc fingers lie at residues 507 to 524 (RLCYTCGSPGHYQAQCPK) and 533 to 550 (ERCQLCDGMGHNAKQCRR). The interval 544–571 (NAKQCRRRDSNQGQRPGRGLSSGPWPVS) is disordered. The region spanning 609 to 690 (ITALLDSGAD…VRGSILGRDC (82 aa)) is the Peptidase A2 domain. Aspartate 614 acts as the For protease activity; shared with dimeric partner in catalysis. Residues 750–938 (LQLGHIEPSL…PGVQYLGYKL (189 aa)) form the Reverse transcriptase domain. Mg(2+)-binding residues include aspartate 815, aspartate 890, aspartate 891, aspartate 1158, glutamate 1192, aspartate 1213, and aspartate 1272. The 132-residue stretch at 1149 to 1280 (PVPGPTVFTD…ADSQATFQAY (132 aa)) folds into the RNase H type-1 domain. An Integrase-type zinc finger spans residues 1280 to 1321 (YPLREAKDLHTTLHIGPRALSKACNISMQQAREVVQTCPHCN). Zn(2+) is bound by residues histidine 1289, histidine 1293, cysteine 1317, and cysteine 1320. Residues 1333-1496 (RGLGPLQIWQ…TPVQKHWRPT (164 aa)) enclose the Integrase catalytic domain. Mg(2+) contacts are provided by aspartate 1344, aspartate 1401, and glutamate 1437. Positions 1502–1550 (PPVKIRIETGEWEKGWNVLVWGRGYAAVKNRDTDKVIWVPSRKVKPDIT) form a DNA-binding region, integrase-type. The segment at 1548 to 1567 (DITQKDEVTKKDEASPLFAG) is involved in homooctamerization. Positions 1549–1561 (ITQKDEVTKKDEA) are enriched in basic and acidic residues. Positions 1549 to 1603 (ITQKDEVTKKDEASPLFAGSSDWIPWGDEQEGLQEEAASNKQEGPGEDTLAANES) are disordered.

As to quaternary structure, active as a homodimer. Homodimer. Homomultimer. Homohexamer. In terms of assembly, homodimer; further associates as a homooctamer. As to quaternary structure, heterodimer of alpha and beta subunits. Three forms of RT exist: alpha-alpha (alpha-Pol), beta-beta (beta-Pol), and alpha-beta, with the major form being the heterodimer. Both the polymerase and RNase H active sites are located in the alpha subunit of heterodimeric RT alpha-beta. The cofactor is Mg(2+). Requires Mn(2+) as cofactor. Specific enzymatic cleavages in vivo yield mature proteins. In terms of processing, capsid protein p27: The cleavage at the C-terminus is slowly trimmed by the viral protease, sometimes being cut internally thereby generating the short version of the capsid protein and a capsid protein C-terminally extended by 3 amino acids in a ratio of 2:1.

The protein localises to the virion. The catalysed reaction is DNA(n) + a 2'-deoxyribonucleoside 5'-triphosphate = DNA(n+1) + diphosphate. It catalyses the reaction Endonucleolytic cleavage to 5'-phosphomonoester.. Its function is as follows. Capsid protein p27: Self-associates to form the irregular polyhedron core composed of hexamers and pentamers, that encapsulates the genomic RNA-nucleocapsid complex. Assembles as a tube in vitro. Binds to inositol hexakisphosphate (IP6), which allows the assembly of the polyhedral capsid. In terms of biological role, plays a role in the oligomerization of the Gag polyprotein and in the stabilization of the immature particle. Essential layering element during tube assembly. Allows the cooperative binging of Gag to the host plasma membrane. Binds strongly to viral nucleic acids and promotes their packaging. Plays a role in the maturation-stabilization of the viral dimeric RNA via highly structured zinc-binding motifs. Functionally, the aspartyl protease mediates proteolytic cleavages of Gag and Gag-Pol polyproteins during or shortly after the release of the virion from the plasma membrane. Cleavages take place as an ordered, step-wise cascade to yield mature proteins. This process is called maturation. Displays maximal activity during the budding process just prior to particle release from the cell. Its function is as follows. Catalyzes viral DNA integration into the host chromosome, by performing a series of DNA cutting and joining reactions. This recombination event is an essential step in the viral replication cycle. Has a strong preference for using the 3'-OH at the viral DNA end as a nucleophile. The protein is Gag-Pol polyprotein (gag-pol) of Rous sarcoma virus subgroup B (strain Schmidt-Ruppin) (RSV-SR-B).